The following is a 503-amino-acid chain: UDP-N-acetylmuramoylalanine--D-glutamate ligase (503 aa).

129–135 (GTNGKTT) contacts ATP.

Belongs to the MurCDEF family.

The protein localises to the cytoplasm. The catalysed reaction is UDP-N-acetyl-alpha-D-muramoyl-L-alanine + D-glutamate + ATP = UDP-N-acetyl-alpha-D-muramoyl-L-alanyl-D-glutamate + ADP + phosphate + H(+). It participates in cell wall biogenesis; peptidoglycan biosynthesis. Cell wall formation. Catalyzes the addition of glutamate to the nucleotide precursor UDP-N-acetylmuramoyl-L-alanine (UMA). This is UDP-N-acetylmuramoylalanine--D-glutamate ligase from Burkholderia multivorans (strain ATCC 17616 / 249).